The primary structure comprises 179 residues: ADP-ribosylation factor-like protein 5A (179 aa).

The N-myristoyl glycine moiety is linked to residue Gly2. GTP-binding positions include 23–30 (GLDNAGKT), 66–70 (DIGGQ), 125–128 (NKQD), and Ala159.

Belongs to the small GTPase superfamily. Arf family.

Its function is as follows. Lacks ADP-ribosylation enhancing activity. This Bos taurus (Bovine) protein is ADP-ribosylation factor-like protein 5A (ARL5A).